The sequence spans 257 residues: 3-deoxy-manno-octulosonate cytidylyltransferase (257 aa).

The protein belongs to the KdsB family.

Its subcellular location is the cytoplasm. It carries out the reaction 3-deoxy-alpha-D-manno-oct-2-ulosonate + CTP = CMP-3-deoxy-beta-D-manno-octulosonate + diphosphate. It participates in nucleotide-sugar biosynthesis; CMP-3-deoxy-D-manno-octulosonate biosynthesis; CMP-3-deoxy-D-manno-octulosonate from 3-deoxy-D-manno-octulosonate and CTP: step 1/1. Its pathway is bacterial outer membrane biogenesis; lipopolysaccharide biosynthesis. Activates KDO (a required 8-carbon sugar) for incorporation into bacterial lipopolysaccharide in Gram-negative bacteria. This chain is 3-deoxy-manno-octulosonate cytidylyltransferase, found in Rhodospirillum centenum (strain ATCC 51521 / SW).